The primary structure comprises 576 residues: Periodic tryptophan protein 1 (576 aa).

The disordered stretch occupies residues 41-134; that stretch reads AKATLEEAEG…LPNQEDSQEE (94 aa). Acidic residues-rich tracts occupy residues 46–58 and 71–91; these read EEAE…EDDA and DIDD…EIAD. At Ser-52 the chain carries Phosphoserine. Residues 108 to 120 show a composition bias toward basic and acidic residues; the sequence is SDVKFHEGEKGED. Ser-131 carries the post-translational modification Phosphoserine. WD repeat units lie at residues 207–252, 284–324, 329–369, 376–414, 420–461, and 472–514; these read AFPL…KAFP, HHTD…AARS, HSNK…ESQM, MAGE…NRKP, AHDA…ATNT, and FDVG…SVRK. The interval 530-576 is disordered; that stretch reads EAQKIGKSSRIARKYTSNDNPDTVITIDDQGEDEEEREGGDEHDDMA. The span at 558–576 shows a compositional bias: acidic residues; it reads DQGEDEEEREGGDEHDDMA.

Belongs to the WD repeat PWP1 family.

The protein is Periodic tryptophan protein 1 (PWP1) of Saccharomyces cerevisiae (strain ATCC 204508 / S288c) (Baker's yeast).